Consider the following 126-residue polypeptide: Aspartate 1-decarboxylase (126 aa).

The active-site Schiff-base intermediate with substrate; via pyruvic acid is the Ser25. Ser25 carries the post-translational modification Pyruvic acid (Ser). A substrate-binding site is contributed by Thr57. Residue Tyr58 is the Proton donor of the active site. 73–75 (GAA) contributes to the substrate binding site.

Belongs to the PanD family. Heterooctamer of four alpha and four beta subunits. It depends on pyruvate as a cofactor. Is synthesized initially as an inactive proenzyme, which is activated by self-cleavage at a specific serine bond to produce a beta-subunit with a hydroxyl group at its C-terminus and an alpha-subunit with a pyruvoyl group at its N-terminus.

It localises to the cytoplasm. It carries out the reaction L-aspartate + H(+) = beta-alanine + CO2. It functions in the pathway cofactor biosynthesis; (R)-pantothenate biosynthesis; beta-alanine from L-aspartate: step 1/1. Catalyzes the pyruvoyl-dependent decarboxylation of aspartate to produce beta-alanine. This chain is Aspartate 1-decarboxylase, found in Edwardsiella ictaluri (strain 93-146).